We begin with the raw amino-acid sequence, 1034 residues long: FACT complex subunit spt-16 (1034 aa).

Composition is skewed to basic and acidic residues over residues 433–448, 463–481, and 493–503; these read EEQENRETERDTDQKK, TRNKTTNEDLRKERQKELG, and SKQDGGTDEKK. The disordered stretch occupies residues 433–511; it reads EEQENRETER…KKVKKSNVSY (79 aa). Residues 617–642 are a coiled coil; that stretch reads LSTAFRQIKEMQKRFRTEEAEEREKD. 2 stretches are compositionally biased toward acidic residues: residues 926-950 and 959-983; these read AESEGEDAGDDSDESDAYDPEEADA and SDEDESEGEETESDDDEEGSLDSDE. A disordered region spans residues 926-1034; the sequence is AESEGEDAGD…KAGPSHKRRK (109 aa). Residues 984–1020 are compositionally biased toward basic and acidic residues; the sequence is SEGKDWSDLEEEAAKADKRREVEDGGRDRDRDRDRKR. A compositionally biased stretch (basic residues) spans 1021 to 1034; it reads PSSSKAGPSHKRRK.

This sequence belongs to the peptidase M24 family. SPT16 subfamily. As to quaternary structure, component of the FACT complex, a stable heterodimer of spt-16 and hmg-3 or hmg-4.

It is found in the nucleus. Its subcellular location is the chromosome. In terms of biological role, component of the FACT complex, a general chromatin factor that acts to reorganize nucleosomes. The FACT complex is involved in multiple processes that require DNA as a template such as mRNA elongation, DNA replication and DNA repair. During transcription elongation the FACT complex acts as a histone chaperone that both destabilizes and restores nucleosomal structure. It facilitates the passage of RNA polymerase II and transcription by promoting the dissociation of one histone H2A-H2B dimer from the nucleosome, then subsequently promotes the reestablishment of the nucleosome following the passage of RNA polymerase II. The sequence is that of FACT complex subunit spt-16 (spt-16) from Caenorhabditis briggsae.